The primary structure comprises 449 residues: Cyclin-B1-5 (449 aa).

Disordered regions lie at residues 1–37 (MATRHQRAAAAPQPANRGAAVAAGKQKAAATAAAGRP) and 98–147 (PARK…GGSA). Composition is skewed to low complexity over residues 8 to 37 (AAAAPQPANRGAAVAAGKQKAAATAAAGRP) and 136 to 147 (SEGAGSSSGGSA).

Belongs to the cyclin family. Cyclin AB subfamily.

In Oryza sativa subsp. japonica (Rice), this protein is Cyclin-B1-5 (CYCB1-5).